The sequence spans 418 residues: Sterigmatocystin 8-O-methyltransferase (418 aa).

A propeptide spanning residues 1-41 (MALPSKAALVGLANTLSEQVKRYLATAGETKSPEDHKLCIE) is cleaved from the precursor. Residue 170–176 (MRSGASF) coordinates substrate. The interval 206 to 225 (LFDYYSTVDEVRGRRFDLGM) is substrate binding. S-adenosyl-L-methionine is bound by residues 254–255 (GG), Asp277, 297–298 (DI), and Arg313. The active-site Proton acceptor is His317.

This sequence belongs to the class I-like SAM-binding methyltransferase superfamily. Cation-independent O-methyltransferase family. COMT subfamily.

The protein localises to the cytoplasm. It localises to the vacuole. The enzyme catalyses sterigmatocystin + S-adenosyl-L-methionine = 8-O-methylsterigmatocystin + S-adenosyl-L-homocysteine + H(+). The catalysed reaction is dihydrosterigmatocystin + S-adenosyl-L-methionine = 8-O-methyldihydrosterigmatocystin + S-adenosyl-L-homocysteine + H(+). It functions in the pathway mycotoxin biosynthesis; aflatoxin biosynthesis. Functionally, sterigmatocystin 8-O-methyltransferase; part of the gene cluster that mediates the biosynthesis of aflatoxins, a group of polyketide-derived furanocoumarins, and part of the most toxic and carcinogenic compounds among the known mycotoxins. The four major aflatoxins produced by A.parasiticus are aflatoxin B1 (AFB1), aflatoxin B2 (AFB2), aflatoxin G1 (AFG1) and aflatoxin G2 (AFG2). Within the aflatoxin pathway, the O-methyltransferase aflP uses both sterigmatocystin (ST) and dihydrosterigmatocystin (DHST) as substrates to yield O-methylsterigmatocystin (OMST) and dihydro-O-methylsterigmatocystin (DHOMST), respectively. The biosynthesis of aflatoxins begins with the norsolorinic acid synthase aflC that combines a hexanoyl starter unit produced by the fatty acid synthase aflA/aflB and 7 malonyl-CoA extender units to synthesize the precursor NOR. The second step is the conversion of NOR to averantin and requires the norsolorinic acid ketoreductase aflD, which catalyzes the dehydration of norsolorinic acid to form (1'S)-averantin. The norsolorinic acid reductases aflE and aflF may also play a role in the conversion of NOR to AVN. The cytochrome P450 monooxygenase aflG then catalyzes the hydroxylation of AVN to 5'hydroxyaverantin (HAVN). The next step is performed by the 5'-hydroxyaverantin dehydrogenase aflH that transforms HAVN to 5'-oxoaverantin (OAVN) which is further converted to averufin (AVF) by aflK that plays a dual role in the pathway, as a 5'-oxoaverantin cyclase that mediates conversion of 5'-oxoaverantin, as well as a versicolorin B synthase in a later step in the pathway. The averufin oxidase aflI catalyzes the conversion of AVF to versiconal hemiacetal acetate (VHA). VHA is then the substrate for the versiconal hemiacetal acetate esterase aflJ to yield versiconal (VAL). Versicolorin B synthase aflK then converts VAL to versicolorin B (VERB) by closing the bisfuran ring of aflatoxin which is required for DNA-binding, thus giving to aflatoxin its activity as a mutagen. Then, the activity of the versicolorin B desaturase aflL leads to versicolorin A (VERA). A branch point starts from VERB since it can also be converted to dihydrodemethylsterigmatocystin (DMDHST), probably also by aflL, VERA being a precursor for aflatoxins B1 and G1, and DMDHST for aflatoxins B2 and G2. Next, the versicolorin reductase aflM and the cytochrome P450 monooxygenase aflN are involved in conversion of VERA to demethylsterigmatocystin (DMST). AflX and aflY seem also involved in this step, through probable aflX-mediated epoxide ring-opening step following versicolorin A oxidation and aflY-mediated Baeyer-Villiger oxidation required for the formation of the xanthone ring. The methyltransferase aflO then leads to the modification of DMST to sterigmatocystin (ST), and of DMDHST to dihydrosterigmatocystin (DHST). Both ST and DHST are then substrates of the O-methyltransferase aflP to yield O-methylsterigmatocystin (OMST) and dihydro-O-methylsterigmatocystin (DHOMST), respectively. Finally OMST is converted to aflatoxins B1 and G1, and DHOMST to aflatoxins B2 and G2, via the action of several enzymes including O-methylsterigmatocystin oxidoreductase aflQ, the cytochrome P450 monooxygenase aflU, but also the NADH-dependent flavin oxidoreductase nadA which is specifically required for the synthesis of AFG1. This chain is Sterigmatocystin 8-O-methyltransferase, found in Aspergillus parasiticus (strain ATCC 56775 / NRRL 5862 / SRRC 143 / SU-1).